The chain runs to 55 residues: Large ribosomal subunit protein bL33 (55 aa).

Basic and acidic residues predominate over residues 1-11 (MAKSGRDKIKL). Residues 1–28 (MAKSGRDKIKLESTAGTGHFYTTTKNKR) form a disordered region. Residues 14–24 (TAGTGHFYTTT) are compositionally biased toward polar residues.

It belongs to the bacterial ribosomal protein bL33 family.

In Janthinobacterium sp. (strain Marseille) (Minibacterium massiliensis), this protein is Large ribosomal subunit protein bL33.